The primary structure comprises 648 residues: FAD-binding monooxygenase trt3 (648 aa).

FAD is bound by residues 118 to 121, 130 to 131, and Tyr136; these read TWYW and DI. 128–130 is an NADP(+) binding site; that stretch reads MCD. Residues 274-280 and 297-298 contribute to the NADP(+) site; these read TGSTAVQ and RT.

It belongs to the FAD-binding monooxygenase family. FAD is required as a cofactor.

It functions in the pathway secondary metabolite biosynthesis; terpenoid biosynthesis. Its function is as follows. FAD-binding monooxygenase; part of the gene cluster that mediates the biosynthesis of terretonin, a fungal meroterpenoid that acts as a mycotoxin. The first step of the pathway is the synthesis of 3,5-dimethylorsellinic acid (DMOA) by the polyketide synthase trt4. DMOA is then prenylated into farnesyl-DMOA by the polyprenyl transferase trt2. Methylation by the methyltransferase trt5 then leads to farnesyl-DMOA methyl ester which is further subject to epoxidation by the FAD-dependent monooxygenase trt8 to yield epoxyfarnesyl-DMOA methyl ester. Cyclization of epoxyfarnesyl-DMOA methyl ester by the terpene cyclase trt1 leads to a tetracycle intermediate which is in turn converted to preterretonin. Dehydrogenase trt9 comes next to transform preterretonin to preterrenoid. The FAD-dependent monooxygenase trt3 is then required for the C-hydroxylation at C16 of preterrenoid to yield terrenoid. The cytochrome P450 trt6 catalyzes three successive oxidations to transform terrenoid into an unstable intermediate, which then undergoes the D-ring expansion and unusual rearrangement of the methoxy group to afford the core skeleton of terretonin. Trt14 catalyzes the D-ring expansion of terretonin involving intramolecular methoxy rearrangement as well as the hydrolysis of the expanded D-ring and the methyl ester moiety. Finally, the nonheme iron-dependent dioxygenase trt7 accomplishes the last two oxidation reactions steps to complete the biosynthesis of terretonin. Terretonin C is produced via spontaneous decarboxylation of the terretonin precursor. Another shunt product of the terretonin biosynthesis is dihydrofarnesyl-DMOA, derived from epoxyfarnesyl-DMOA through hydrolysis of the epoxide. The polypeptide is FAD-binding monooxygenase trt3 (Aspergillus terreus (strain NIH 2624 / FGSC A1156)).